Consider the following 360-residue polypeptide: Mediator of RNA polymerase II transcription subunit 6 (360 aa).

2 disordered regions span residues 186–238 and 316–360; these read PAQP…NDPL and AAAA…PGAA. Composition is skewed to low complexity over residues 190 to 205 and 316 to 325; these read SAGA…YTAS and AAAAAANANA.

This sequence belongs to the Mediator complex subunit 6 family. As to quaternary structure, component of the Mediator complex.

The protein resides in the nucleus. Component of the Mediator complex, a coactivator involved in the regulated transcription of nearly all RNA polymerase II-dependent genes. Mediator functions as a bridge to convey information from gene-specific regulatory proteins to the basal RNA polymerase II transcription machinery. Mediator is recruited to promoters by direct interactions with regulatory proteins and serves as a scaffold for the assembly of a functional preinitiation complex with RNA polymerase II and the general transcription factors. This is Mediator of RNA polymerase II transcription subunit 6 (med-6) from Neurospora crassa (strain ATCC 24698 / 74-OR23-1A / CBS 708.71 / DSM 1257 / FGSC 987).